A 100-amino-acid chain; its full sequence is Large ribosomal subunit protein uL23 (100 aa).

The protein belongs to the universal ribosomal protein uL23 family. In terms of assembly, part of the 50S ribosomal subunit. Contacts protein L29, and trigger factor when it is bound to the ribosome.

In terms of biological role, one of the early assembly proteins it binds 23S rRNA. One of the proteins that surrounds the polypeptide exit tunnel on the outside of the ribosome. Forms the main docking site for trigger factor binding to the ribosome. The sequence is that of Large ribosomal subunit protein uL23 from Photorhabdus laumondii subsp. laumondii (strain DSM 15139 / CIP 105565 / TT01) (Photorhabdus luminescens subsp. laumondii).